Consider the following 375-residue polypeptide: MKYAAVLTTVAALASRALGAGVSGTAEGFASSATGGGSATAVYPTTTDELVSYLGDDEARVIVLSQTFDFTNTEGTTTETGCAPWGTGSACQVAINKDDWCTNYESSAPSTSVTYDNAGSLGITVNSNKSLIGEGTKGVIKGKGLRIVNGVENVIIQNIAVTDINPKYVWGGDAITINQADLVWIDHVTTARIGRQHYVLGTEADNRVTLSNNYIDGESDYSATCDGHHYWNVYLDGSSDKVTMKGNYFYKTSGRAPKVQGNTYLHAVNNYWNDNSNHAFEIGSGGYVLAEGNTFADVTAAVEDSSFEGELFSSSSDADTCSSYIGRACKANSFTNSGDLSGTTVDVLSKFKGETVATADTASTAPASNAGQGNL.

A signal peptide spans 1–19; that stretch reads MKYAAVLTTVAALASRALG. 2 cysteine pairs are disulfide-bonded: cysteine 82–cysteine 101 and cysteine 91–cysteine 225. Asparagine 128 carries N-linked (GlcNAc...) asparagine glycosylation. Arginine 255 is an active-site residue. A disulfide bond links cysteine 321 and cysteine 329.

Belongs to the polysaccharide lyase 1 family.

The protein resides in the secreted. It catalyses the reaction Eliminative cleavage of (1-&gt;4)-alpha-D-galacturonan methyl ester to give oligosaccharides with 4-deoxy-6-O-methyl-alpha-D-galact-4-enuronosyl groups at their non-reducing ends.. Pectinolytic enzymes consist of four classes of enzymes: pectin lyase, polygalacturonase, pectin methylesterase and rhamnogalacturonase. Among pectinolytic enzymes, pectin lyase is the most important in depolymerization of pectin, since it cleaves internal glycosidic bonds of highly methylated pectins. The sequence is that of Probable pectin lyase D (pelD) from Aspergillus flavus (strain ATCC 200026 / FGSC A1120 / IAM 13836 / NRRL 3357 / JCM 12722 / SRRC 167).